Reading from the N-terminus, the 66-residue chain is Large ribosomal subunit protein bL35 (66 aa).

This sequence belongs to the bacterial ribosomal protein bL35 family.

The sequence is that of Large ribosomal subunit protein bL35 from Caulobacter vibrioides (strain ATCC 19089 / CIP 103742 / CB 15) (Caulobacter crescentus).